Reading from the N-terminus, the 197-residue chain is Imidazoleglycerol-phosphate dehydratase (197 aa).

Belongs to the imidazoleglycerol-phosphate dehydratase family.

It localises to the cytoplasm. The catalysed reaction is D-erythro-1-(imidazol-4-yl)glycerol 3-phosphate = 3-(imidazol-4-yl)-2-oxopropyl phosphate + H2O. It participates in amino-acid biosynthesis; L-histidine biosynthesis; L-histidine from 5-phospho-alpha-D-ribose 1-diphosphate: step 6/9. This Laribacter hongkongensis (strain HLHK9) protein is Imidazoleglycerol-phosphate dehydratase.